Consider the following 272-residue polypeptide: GPN-loop GTPase 3 (272 aa).

12 to 17 (GAGKST) provides a ligand contact to GTP. The Gly-Pro-Asn (GPN)-loop; involved in dimer interface signature appears at 69 to 71 (GPN). 172–175 (SKMD) provides a ligand contact to GTP. A disordered region spans residues 253–272 (QYGEDEEPKVPKDMDDGDFD).

The protein belongs to the GPN-loop GTPase family. As to quaternary structure, heterodimers with GPN1 or GPN2. Binds to RNA polymerase II (RNAPII).

Functionally, small GTPase required for proper nuclear import of RNA polymerase II and III (RNAPII and RNAPIII). May act at an RNAP assembly step prior to nuclear import. This chain is GPN-loop GTPase 3, found in Cryptococcus neoformans var. neoformans serotype D (strain JEC21 / ATCC MYA-565) (Filobasidiella neoformans).